The following is a 546-amino-acid chain: Chaperonin GroEL (546 aa).

Residues 29–32, K50, 86–90, G414, and D492 each bind ATP; these read TMGP and DGTTT.

Belongs to the chaperonin (HSP60) family. Forms a cylinder of 14 subunits composed of two heptameric rings stacked back-to-back. Interacts with the co-chaperonin GroES.

The protein resides in the cytoplasm. The enzyme catalyses ATP + H2O + a folded polypeptide = ADP + phosphate + an unfolded polypeptide.. In terms of biological role, together with its co-chaperonin GroES, plays an essential role in assisting protein folding. The GroEL-GroES system forms a nano-cage that allows encapsulation of the non-native substrate proteins and provides a physical environment optimized to promote and accelerate protein folding. The sequence is that of Chaperonin GroEL from Helicobacter acinonychis (strain Sheeba).